The primary structure comprises 368 residues: F-box protein At3g17710 (368 aa).

One can recognise an F-box domain in the interval 1–46; sequence MASVKLPWDLEEEILSRLPPRSLVRFRTVCKHWNGLFSDKRFVKKH.

In Arabidopsis thaliana (Mouse-ear cress), this protein is F-box protein At3g17710.